The sequence spans 213 residues: Protein DMP4 (213 aa).

Helical transmembrane passes span 51 to 71, 78 to 98, 142 to 162, and 180 to 200; these read LANL…PIFS, LVSK…CFIL, FIDF…VLFD, and VLTA…ATFP.

Belongs to the plant DMP1 protein family. As to expression, expressed in leaves, flowers and siliques, especially in vascular tissues.

It localises to the vacuole membrane. Its function is as follows. Involved in membrane remodeling. In Arabidopsis thaliana (Mouse-ear cress), this protein is Protein DMP4.